The primary structure comprises 475 residues: BTB/POZ domain-containing protein 10 (475 aa).

A disordered region spans residues 1 to 144; that stretch reads MAGRPHPYDS…SQSSSDGSCK (144 aa). Residues 22 to 31 show a composition bias toward basic residues; sequence LHSRPRKLYK. Residues 57-80 are compositionally biased toward basic and acidic residues; it reads GHERSRDRRRSSDRSRDSSHERAE. A compositionally biased stretch (polar residues) spans 81-94; that stretch reads SQLTPCIRNVTSPT. The segment covering 97–107 has biased composition (basic and acidic residues); sequence HHIEREKDHSS. Low complexity predominate over residues 108–144; that stretch reads SRPSSPRPQRASPNGSMSSAGNSSRNSSQSSSDGSCK. The segment at 146–475 is interaction with AKT family members; that stretch reads SGEMVFVYEN…LDPDAQNPML (330 aa). One can recognise a BTB domain in the interval 167–241; the sequence is ERVTLIVDNT…YKTGIIRCPD (75 aa). Residues 451–475 form a disordered region; sequence ELDILPSHPASGNNDLDPDAQNPML.

In terms of assembly, interacts (via C-terminal 330-amino-acid region) with AKT1; AKT2 and AKT3. Interacts with PPP2CA and PPP1CA. In terms of tissue distribution, ubiquitously expressed (at protein level).

Its subcellular location is the nucleus. The protein localises to the cytoplasm. In terms of biological role, plays a major role as an activator of AKT family members by inhibiting PPP2CA-mediated dephosphorylation, thereby keeping AKTs activated. Plays a role in preventing motor neuronal death and in accelerating the growth of pancreatic beta cells. The chain is BTB/POZ domain-containing protein 10 (Btbd10) from Mus musculus (Mouse).